We begin with the raw amino-acid sequence, 460 residues long: Zinc transporter 6 (460 aa).

The Cytoplasmic portion of the chain corresponds to 1–33 (MGTIHLFRKPQRSFFGKLLQEFRLVAADRRSWK). Residues 34–54 (ILLFGAINVLCTGFLLMWCSS) form a helical membrane-spanning segment. Over 55–64 (TNSIALTAYT) the chain is Extracellular. Residues 65–85 (YLTIFDLFSLITCLISYWVMM) traverse the membrane as a helical segment. The Cytoplasmic portion of the chain corresponds to 86–98 (RKPSPVYSFGFER). The helical transmembrane segment at 99–119 (LEVLAVFASTVLAQLGALFIL) threads the bilayer. The Extracellular segment spans residues 120–134 (KESAERFLEQPEIHT). The helical transmembrane segment at 135–155 (GRLLVGTFVALSFNLFTMLSI) threads the bilayer. At 156 to 200 (RNKPFAYVSEAASTSWLQEHVADLSRSLCGLIPGLSSIFLPRMNP) the chain is on the cytoplasmic side. Residues 201–221 (FVLIDLAGAFALCITYMLIEI) form a helical membrane-spanning segment. The Extracellular segment spans residues 222–223 (NN). A helical membrane pass occupies residues 224 to 244 (YFAVDTASAIAIALMTFGTMY). Over 245-460 (PMSVYSGKVL…GINRMGQPRP (216 aa)) the chain is Cytoplasmic. A disordered region spans residues 371 to 390 (TPVTSTPAKPSSPPPEFSFN).

The protein belongs to the cation diffusion facilitator (CDF) transporter (TC 2.A.4) family. SLC30A subfamily. As to quaternary structure, heterodimer with SLC30A5; form a functional zinc ion transmembrane transporter. Expressed in brain and liver, and to a lower extent also in lung. Highly expressed in brain (at protein level).

It is found in the golgi apparatus. The protein localises to the trans-Golgi network membrane. In terms of biological role, has probably no intrinsic transporter activity but together with SLC30A5 forms a functional zinc ion:proton antiporter heterodimer, mediating zinc entry into the lumen of organelles along the secretory pathway. As part of that zinc ion:proton antiporter, contributes to zinc ion homeostasis within the early secretory pathway and regulates the activation and folding of enzymes like alkaline phosphatases and enzymes involved in phosphatidylinositol glycan anchor biosynthesis. In Mus musculus (Mouse), this protein is Zinc transporter 6 (Slc30a6).